The sequence spans 226 residues: N-acetylmuramic acid 6-phosphate phosphatase (226 aa).

D12 acts as the Nucleophile in catalysis. Mg(2+) contacts are provided by D12, D14, and D171. The active-site Proton donor is the D14.

This sequence belongs to the HAD-like hydrolase superfamily. CbbY/CbbZ/Gph/YieH family. Phosphatase MupP subfamily. It depends on Mg(2+) as a cofactor.

It carries out the reaction N-acetyl-D-muramate 6-phosphate + H2O = N-acetyl-D-muramate + phosphate. It functions in the pathway cell wall biogenesis; peptidoglycan recycling. Specifically catalyzes the dephosphorylation of N-acetylmuramate 6-phosphate (MurNAc-6P) to MurNac. Is involved in peptidoglycan recycling as part of a cell wall recycling pathway that bypasses de novo biosynthesis of the peptidoglycan precursor UDP-MurNAc. Plays a role in intrinsic resistance to fosfomycin, which targets the de novo synthesis of UDP-MurNAc. This is N-acetylmuramic acid 6-phosphate phosphatase from Pseudomonas aeruginosa (strain ATCC 15692 / DSM 22644 / CIP 104116 / JCM 14847 / LMG 12228 / 1C / PRS 101 / PAO1).